A 335-amino-acid chain; its full sequence is Biotin synthase (335 aa).

The 229-residue stretch at 46–274 (YKVQLASLFS…KSKIRLSAGR (229 aa)) folds into the Radical SAM core domain. The [4Fe-4S] cluster site is built by Cys-61, Cys-65, and Cys-68. Residues Cys-105, Cys-137, Cys-197, and Arg-269 each contribute to the [2Fe-2S] cluster site.

It belongs to the radical SAM superfamily. Biotin synthase family. In terms of assembly, homodimer. Requires [4Fe-4S] cluster as cofactor. [2Fe-2S] cluster is required as a cofactor.

It catalyses the reaction (4R,5S)-dethiobiotin + (sulfur carrier)-SH + 2 reduced [2Fe-2S]-[ferredoxin] + 2 S-adenosyl-L-methionine = (sulfur carrier)-H + biotin + 2 5'-deoxyadenosine + 2 L-methionine + 2 oxidized [2Fe-2S]-[ferredoxin]. It participates in cofactor biosynthesis; biotin biosynthesis; biotin from 7,8-diaminononanoate: step 2/2. In terms of biological role, catalyzes the conversion of dethiobiotin (DTB) to biotin by the insertion of a sulfur atom into dethiobiotin via a radical-based mechanism. The protein is Biotin synthase of Prochlorococcus marinus subsp. pastoris (strain CCMP1986 / NIES-2087 / MED4).